The following is a 416-amino-acid chain: Adipocyte plasma membrane-associated protein (416 aa).

The interval 1–32 (MSEADGLRQRRPLRPQVVTDDDGQAPEAKDGS) is disordered. Position 2 is an N-acetylserine (Ser2). At 2-40 (SEADGLRQRRPLRPQVVTDDDGQAPEAKDGSSFSGRVFR) the chain is on the cytoplasmic side. Phosphothreonine is present on Thr19. Residues 41-61 (VTFLMLAVSLTVPLLGAMMLL) traverse the membrane as a helical; Signal-anchor for type II membrane protein segment. The Extracellular portion of the chain corresponds to 62-416 (ESPIDPQPLS…FLCRLSLQAV (355 aa)). N-linked (GlcNAc...) asparagine glycans are attached at residues Asn160 and Asn196.

Belongs to the strictosidine synthase family. Liver, glomerular and tubular structures of the kidney, endothelial cells, arterial wall and pancreatic islets of Langerhans (at protein level). Found ubiquitously in adult as well as in embryonic tissues. In adult tissue, the highest expression is found in the liver, placenta and heart. Found on the cell surface of monocytes. In embryonic tissue, the highest expression levels is found in the liver and the kidney.

The protein localises to the membrane. Its function is as follows. Exhibits strong arylesterase activity with beta-naphthyl acetate and phenyl acetate. May play a role in adipocyte differentiation. This Homo sapiens (Human) protein is Adipocyte plasma membrane-associated protein (APMAP).